A 408-amino-acid polypeptide reads, in one-letter code: tRNA-specific 2-thiouridylase MnmA (408 aa).

Residues 27 to 34 (AMSGGVDS) and leucine 53 contribute to the ATP site. Cysteine 121 functions as the Nucleophile in the catalytic mechanism. A disulfide bridge links cysteine 121 with cysteine 222. Glycine 145 serves as a coordination point for ATP. Residues 172–174 (RDQ) form an interaction with tRNA region. Cysteine 222 (cysteine persulfide intermediate) is an active-site residue.

The protein belongs to the MnmA/TRMU family.

Its subcellular location is the cytoplasm. It carries out the reaction S-sulfanyl-L-cysteinyl-[protein] + uridine(34) in tRNA + AH2 + ATP = 2-thiouridine(34) in tRNA + L-cysteinyl-[protein] + A + AMP + diphosphate + H(+). In terms of biological role, catalyzes the 2-thiolation of uridine at the wobble position (U34) of tRNA, leading to the formation of s(2)U34. This Rhizobium etli (strain ATCC 51251 / DSM 11541 / JCM 21823 / NBRC 15573 / CFN 42) protein is tRNA-specific 2-thiouridylase MnmA.